Consider the following 486-residue polypeptide: ATP synthase subunit beta 2 (486 aa).

Residue 166 to 173 (GGAGVGKT) participates in ATP binding.

The protein belongs to the ATPase alpha/beta chains family. As to quaternary structure, F-type ATPases have 2 components, CF(1) - the catalytic core - and CF(0) - the membrane proton channel. CF(1) has five subunits: alpha(3), beta(3), gamma(1), delta(1), epsilon(1). CF(0) has three main subunits: a(1), b(2) and c(9-12). The alpha and beta chains form an alternating ring which encloses part of the gamma chain. CF(1) is attached to CF(0) by a central stalk formed by the gamma and epsilon chains, while a peripheral stalk is formed by the delta and b chains.

The protein resides in the cell inner membrane. It catalyses the reaction ATP + H2O + 4 H(+)(in) = ADP + phosphate + 5 H(+)(out). Functionally, produces ATP from ADP in the presence of a proton gradient across the membrane. The catalytic sites are hosted primarily by the beta subunits. The polypeptide is ATP synthase subunit beta 2 (Gluconobacter oxydans (strain 621H) (Gluconobacter suboxydans)).